A 65-amino-acid polypeptide reads, in one-letter code: UPF0434 protein CPS_2127 (65 aa).

The protein belongs to the UPF0434 family.

In Colwellia psychrerythraea (strain 34H / ATCC BAA-681) (Vibrio psychroerythus), this protein is UPF0434 protein CPS_2127.